The sequence spans 469 residues: Dynein axonemal assembly factor 11 (469 aa).

4 LRR repeats span residues 20-43, 44-65, 66-89, and 90-110; these read IFSL…DKWC, RELK…VSKL, KKLE…GCES, and LQKL…NSLQ. An LRRCT domain is found at 114 to 135; the sequence is HLRELYLVGNPCAEYEGYRQYV. Composition is skewed to basic and acidic residues over residues 179 to 213 and 261 to 286; these read KRAA…RRWY and SRLE…ELKK. Disordered regions lie at residues 179–290 and 436–469; these read KRAA…KPPR and KTQA…PPLM.

This sequence belongs to the tilB family.

The protein resides in the cytoplasm. It localises to the cell projection. Its subcellular location is the cilium. It is found in the dynein axonemal particle. The protein localises to the flagellum. Functionally, involved in dynein arm assembly, is important for expression and transporting outer dynein arm (ODA) proteins from the cytoplasm to the cilia. The chain is Dynein axonemal assembly factor 11 (dnaaf11) from Xenopus laevis (African clawed frog).